A 466-amino-acid chain; its full sequence is Glycine--tRNA ligase (466 aa).

Substrate contacts are provided by arginine 104 and glutamate 178. Residues 210–212 (RNE), 220–225 (FRTREF), 294–295 (EL), and 338–341 (GADR) each bind ATP. A substrate-binding site is contributed by 225 to 229 (FEQME). 334–338 (EPSLG) serves as a coordination point for substrate.

It belongs to the class-II aminoacyl-tRNA synthetase family. Homodimer.

It is found in the cytoplasm. It carries out the reaction tRNA(Gly) + glycine + ATP = glycyl-tRNA(Gly) + AMP + diphosphate. Catalyzes the attachment of glycine to tRNA(Gly). The protein is Glycine--tRNA ligase of Geobacillus thermodenitrificans (strain NG80-2).